The chain runs to 490 residues: Tektin-3 (490 aa).

2 O-linked (GalNAc...) threonine glycosylation sites follow: threonine 7 and threonine 9. 4 N-linked (GlcNAc...) asparagine glycosylation sites follow: asparagine 41, asparagine 86, asparagine 111, and asparagine 276. Residues 419-456 are a coiled coil; sequence RLVNEVYEVDETIQTLQQRLRDSEDTLQSLAHTKATLE.

This sequence belongs to the tektin family. As to quaternary structure, microtubule inner protein component of sperm flagellar doublet microtubules. Interacts with TEKT1, TEKT2, TEKT4 and TEKT5. Interacts with CCDC38. In terms of processing, N- and O-glycosylated. May be proteolytically processed during the epididymal transit of spermatozoa. Post-translationally, ubiquitinated, leading to its degradation. Deubiquitinated by USP16, promoting its stability. In terms of tissue distribution, expressed in epididymal sperm (at protein level).

It is found in the cytoplasm. The protein resides in the cytoskeleton. Its subcellular location is the cilium axoneme. It localises to the flagellum axoneme. The protein localises to the cytoplasmic vesicle. It is found in the secretory vesicle. The protein resides in the acrosome outer membrane. In terms of biological role, microtubule inner protein (MIP) part of the dynein-decorated doublet microtubules (DMTs) in cilia and flagellar axoneme. Forms filamentous polymers in the walls of ciliary and flagellar microtubules. Required for normal sperm mobility. This chain is Tektin-3 (Tekt3), found in Rattus norvegicus (Rat).